Here is a 233-residue protein sequence, read N- to C-terminus: Orotidine 5'-phosphate decarboxylase (233 aa).

Substrate contacts are provided by residues aspartate 10, lysine 32, 59 to 68 (DLKFHDIPNT), threonine 119, arginine 180, glutamine 189, glycine 209, and arginine 210. Lysine 61 (proton donor) is an active-site residue.

Belongs to the OMP decarboxylase family. Type 1 subfamily. As to quaternary structure, homodimer.

The catalysed reaction is orotidine 5'-phosphate + H(+) = UMP + CO2. Its pathway is pyrimidine metabolism; UMP biosynthesis via de novo pathway; UMP from orotate: step 2/2. Functionally, catalyzes the decarboxylation of orotidine 5'-monophosphate (OMP) to uridine 5'-monophosphate (UMP). The protein is Orotidine 5'-phosphate decarboxylase of Pasteurella multocida (strain Pm70).